We begin with the raw amino-acid sequence, 715 residues long: Fatty acid oxidation complex subunit alpha (715 aa).

The tract at residues 1–190 (MIYQGKAITV…KVGAVDAVVA (190 aa)) is enoyl-CoA hydratase/isomerase. Aspartate 297 serves as a coordination point for substrate. Positions 312-715 (HDAKQAAVLG…MAKNGQRFFN (404 aa)) are 3-hydroxyacyl-CoA dehydrogenase. NAD(+) is bound by residues methionine 325, aspartate 344, 401-403 (VVE), lysine 408, and serine 430. Histidine 451 serves as the catalytic For 3-hydroxyacyl-CoA dehydrogenase activity. Asparagine 454 is a binding site for NAD(+). The substrate site is built by asparagine 501 and tyrosine 660.

In the N-terminal section; belongs to the enoyl-CoA hydratase/isomerase family. This sequence in the C-terminal section; belongs to the 3-hydroxyacyl-CoA dehydrogenase family. As to quaternary structure, heterotetramer of two alpha chains (FadB) and two beta chains (FadA).

It carries out the reaction a (3S)-3-hydroxyacyl-CoA + NAD(+) = a 3-oxoacyl-CoA + NADH + H(+). The enzyme catalyses a (3S)-3-hydroxyacyl-CoA = a (2E)-enoyl-CoA + H2O. It catalyses the reaction a 4-saturated-(3S)-3-hydroxyacyl-CoA = a (3E)-enoyl-CoA + H2O. The catalysed reaction is (3S)-3-hydroxybutanoyl-CoA = (3R)-3-hydroxybutanoyl-CoA. It carries out the reaction a (3Z)-enoyl-CoA = a 4-saturated (2E)-enoyl-CoA. The enzyme catalyses a (3E)-enoyl-CoA = a 4-saturated (2E)-enoyl-CoA. Its pathway is lipid metabolism; fatty acid beta-oxidation. Involved in the aerobic and anaerobic degradation of long-chain fatty acids via beta-oxidation cycle. Catalyzes the formation of 3-oxoacyl-CoA from enoyl-CoA via L-3-hydroxyacyl-CoA. It can also use D-3-hydroxyacyl-CoA and cis-3-enoyl-CoA as substrate. The polypeptide is Fatty acid oxidation complex subunit alpha (Ectopseudomonas oleovorans (Pseudomonas oleovorans)).